The following is a 236-amino-acid chain: Small ribosomal subunit protein uS2c (236 aa).

It belongs to the universal ribosomal protein uS2 family.

It is found in the plastid. It localises to the chloroplast. This chain is Small ribosomal subunit protein uS2c (rps2), found in Saccharum hybrid (Sugarcane).